The following is a 515-amino-acid chain: Bifunctional purine biosynthesis protein PurH (515 aa).

In terms of domain architecture, MGS-like spans 1–145; sequence MTKRALISVS…KNHASVTVVV (145 aa).

The protein belongs to the PurH family.

The catalysed reaction is (6R)-10-formyltetrahydrofolate + 5-amino-1-(5-phospho-beta-D-ribosyl)imidazole-4-carboxamide = 5-formamido-1-(5-phospho-D-ribosyl)imidazole-4-carboxamide + (6S)-5,6,7,8-tetrahydrofolate. It carries out the reaction IMP + H2O = 5-formamido-1-(5-phospho-D-ribosyl)imidazole-4-carboxamide. The protein operates within purine metabolism; IMP biosynthesis via de novo pathway; 5-formamido-1-(5-phospho-D-ribosyl)imidazole-4-carboxamide from 5-amino-1-(5-phospho-D-ribosyl)imidazole-4-carboxamide (10-formyl THF route): step 1/1. Its pathway is purine metabolism; IMP biosynthesis via de novo pathway; IMP from 5-formamido-1-(5-phospho-D-ribosyl)imidazole-4-carboxamide: step 1/1. The chain is Bifunctional purine biosynthesis protein PurH from Streptococcus suis.